We begin with the raw amino-acid sequence, 423 residues long: Histidine--tRNA ligase (423 aa).

This sequence belongs to the class-II aminoacyl-tRNA synthetase family. In terms of assembly, homodimer.

It is found in the cytoplasm. It catalyses the reaction tRNA(His) + L-histidine + ATP = L-histidyl-tRNA(His) + AMP + diphosphate + H(+). This Pasteurella multocida (strain Pm70) protein is Histidine--tRNA ligase (hisS).